The following is a 256-amino-acid chain: Photosystem I chlorophyll a/b-binding protein 5, chloroplastic (256 aa).

Residues 1–32 (MAVVLRGGITGGFLHHRRDASSVITRRISSVK) constitute a chloroplast transit peptide. Ala-33 is subject to N-acetylalanine. Trp-49 contacts chlorophyll b. Residues Phe-69 and Glu-88 each contribute to the chlorophyll a site. A chlorophyll b-binding site is contributed by Arg-93. Transmembrane regions (helical) follow at residues 94–113 (FAML…TTGI) and 129–146 (FAST…MGFA). Chlorophyll b contacts are provided by Glu-147 and Arg-150. Positions 205, 206, 209, 211, 223, and 238 each coordinate chlorophyll a. Residues 212-232 (LAMMAMLGFFVQASVTHTGPI) traverse the membrane as a helical segment.

This sequence belongs to the light-harvesting chlorophyll a/b-binding (LHC) protein family. As to quaternary structure, the LHC complex consists of chlorophyll a-b binding proteins. Homodimer. Heterodimer with LHCA2 and, possibly, LHCA3. Can substitute to LHCA4 to form a complex with LHCA1. Binds pigments. Element of the NAD(P)H dehydrogenase-photosystem I supercomplex (NDH-PSI). The cofactor is Binds at least 14 chlorophylls (8 Chl-a and 6 Chl-b) and carotenoids such as lutein and neoxanthin.. Photoregulated by reversible phosphorylation of its threonine residues.

The protein resides in the plastid. It localises to the chloroplast thylakoid membrane. Its function is as follows. The light-harvesting complex (LHC) functions as a light receptor, it captures and delivers excitation energy to photosystems with which it is closely associated. Seems involved in the function of the photosystem I in low light conditions, when other LHCA proteins are less abundant. Required, together with LHCA6, for the formation of a full-size NAD(P)H dehydrogenase-photosystem I supercomplex (NDH-PSI) that triggers cyclic and chlororespiratory electron transport in chloroplast thylakoids, especially under stress conditions (e.g. increased light intensity). This chain is Photosystem I chlorophyll a/b-binding protein 5, chloroplastic, found in Arabidopsis thaliana (Mouse-ear cress).